The sequence spans 432 residues: Glutamate-1-semialdehyde 2,1-aminomutase (432 aa).

Lys-272 carries the N6-(pyridoxal phosphate)lysine modification.

It belongs to the class-III pyridoxal-phosphate-dependent aminotransferase family. HemL subfamily. Homodimer. Pyridoxal 5'-phosphate serves as cofactor.

It localises to the cytoplasm. It catalyses the reaction (S)-4-amino-5-oxopentanoate = 5-aminolevulinate. It participates in porphyrin-containing compound metabolism; protoporphyrin-IX biosynthesis; 5-aminolevulinate from L-glutamyl-tRNA(Glu): step 2/2. Its pathway is porphyrin-containing compound metabolism; chlorophyll biosynthesis. This is Glutamate-1-semialdehyde 2,1-aminomutase from Cyanothece sp. (strain PCC 7425 / ATCC 29141).